We begin with the raw amino-acid sequence, 434 residues long: Glutamate-1-semialdehyde 2,1-aminomutase (434 aa).

N6-(pyridoxal phosphate)lysine is present on K266.

The protein belongs to the class-III pyridoxal-phosphate-dependent aminotransferase family. HemL subfamily. As to quaternary structure, homodimer. The cofactor is pyridoxal 5'-phosphate.

The protein localises to the cytoplasm. It carries out the reaction (S)-4-amino-5-oxopentanoate = 5-aminolevulinate. It participates in porphyrin-containing compound metabolism; protoporphyrin-IX biosynthesis; 5-aminolevulinate from L-glutamyl-tRNA(Glu): step 2/2. The sequence is that of Glutamate-1-semialdehyde 2,1-aminomutase from Psychrobacter sp. (strain PRwf-1).